Consider the following 374-residue polypeptide: MWKISNENDIFKKRKPLPPKKSEESQPELTPWQKQNQEYLKKQAEEAASKGENEQAEVTITLQEQSQEEPQQHLPQETVEEEEHFADRLPNVKKTRNKRLYRRLAFILTCLGTAILVALYFVSPLSRLSEVTVSGNKSVESQAIIQQSKLETGSGLWEQYSNRNYFSANIQKKFPIIKKANIKLNGINSFKIDIQEYQIVALAATKGGYHPILENGKTLAETTKAAESGKPIFENFKEDKLIPELMASYNKLPQEIKQGISEIKYAPSKTNKDLINVYMNDGNRVIVNISDLSEKMAYYSQVAEQMDKPGIVDMEVGIFSYPYEKESEETGSEVSEDSAVENQEVVDPNAGVATDGANNGTPTNGENQEVQQAE.

The segment at 1 to 90 (MWKISNENDI…EEEHFADRLP (90 aa)) is disordered. Residues 1–103 (MWKISNENDI…KTRNKRLYRR (103 aa)) lie on the Cytoplasmic side of the membrane. The segment covering 39–53 (YLKKQAEEAASKGEN) has biased composition (basic and acidic residues). Positions 56-75 (AEVTITLQEQSQEEPQQHLP) are enriched in polar residues. Residues 104 to 124 (LAFILTCLGTAILVALYFVSP) form a helical membrane-spanning segment. Residues 125–374 (LSRLSEVTVS…GENQEVQQAE (250 aa)) lie on the Extracellular side of the membrane. In terms of domain architecture, POTRA spans 126 to 197 (SRLSEVTVSG…NSFKIDIQEY (72 aa)). The tract at residues 325–374 (KESEETGSEVSEDSAVENQEVVDPNAGVATDGANNGTPTNGENQEVQQAE) is disordered. Residues 326–339 (ESEETGSEVSEDSA) show a composition bias toward acidic residues. Polar residues predominate over residues 356 to 374 (GANNGTPTNGENQEVQQAE).

Belongs to the FtsQ/DivIB family. DivIB subfamily.

It is found in the cell membrane. Cell division protein that may be involved in stabilizing or promoting the assembly of the division complex. This Enterococcus faecalis (strain 62) protein is Cell division protein DivIB.